The sequence spans 271 residues: Protein PXR1 (271 aa).

Disordered stretches follow at residues 1–26 and 149–233; these read MGLAAARNKQRFGLDPRNTTWSNNTS and KKRP…DSAA. Residues 17–26 are compositionally biased toward polar residues; that stretch reads RNTTWSNNTS. The G-patch domain maps to 25–71; sequence TSRFGHKHLEKLGWKPGSGLGLVPDSTTSHIKVSIKDDNLGLGAKLK. Residues 165 to 205 are compositionally biased toward basic residues; it reads KKTKKVKKEKKVKKVKKEKKEKKEKKDKKEKKVKKEKKEKK. Positions 206-230 are enriched in basic and acidic residues; sequence EKKLKDKHSKDTNEITRDQMLKPRD.

This sequence belongs to the PINX1 family.

The protein localises to the nucleus. It is found in the nucleolus. Involved in rRNA-processing at A0, A1 and A2 sites and negatively regulates telomerase. This is Protein PXR1 (PXR1) from Kluyveromyces lactis (strain ATCC 8585 / CBS 2359 / DSM 70799 / NBRC 1267 / NRRL Y-1140 / WM37) (Yeast).